Here is a 440-residue protein sequence, read N- to C-terminus: MDQGTMGYQFENWATTYSCEPELYFEPTTVEEIRQILELANQRNKRVKVVGCGHSPSDIACTDNYLVRLNKLNRILQVDKERKWITAEAGILLSDLNEKLDALGLALSNIGAVSDVALGGVIGTGTHNTGIQHGILATQIVAMTLMTAAGDTLECSNTVNREIFQATRLHLGSLGVVLNVTIQCVPAFRIHLQQFPKTLTEVLGDLDTHLKQSEYFRFFWFPHTDKVTVFYADRTNKPIKTTSSWFWNYAIGYYLLEFLLWISVFVPRLVPWINRLFYWLLYSAKAEQVKRSDKAFNFDCLFKQHVSDWALPIKQTRAALEQLKDWLDNNPNVRAHFPVEVRFVRADDILLSPCYRQDSCYINIIMYRPYGKEVPREGYWAMYEEIMKRNGGRPHWAKAHSLLRQDFEKIYPAFHKFCSIREELDPSGMFLNNYLEKTFF.

The 171-residue stretch at 17-187 (YSCEPELYFE…LNVTIQCVPA (171 aa)) folds into the FAD-binding PCMH-type domain. Pros-8alpha-FAD histidine is present on His54. The chain crosses the membrane as a helical span at residues 245–267 (WFWNYAIGYYLLEFLLWISVFVP).

This sequence belongs to the oxygen-dependent FAD-linked oxidoreductase family. It depends on FAD as a cofactor.

The protein localises to the microsome membrane. It is found in the endoplasmic reticulum membrane. It catalyses the reaction L-gulono-1,4-lactone + O2 = L-ascorbate + H2O2 + H(+). It participates in cofactor biosynthesis; L-ascorbate biosynthesis via UDP-alpha-D-glucuronate pathway; L-ascorbate from UDP-alpha-D-glucuronate: step 4/4. Oxidizes L-gulono-1,4-lactone to hydrogen peroxide and L-xylo-hexulonolactone which spontaneously isomerizes to L-ascorbate. The protein is L-gulonolactone oxidase (GULO) of Scyliorhinus torazame (Cloudy catshark).